We begin with the raw amino-acid sequence, 505 residues long: ATP synthase subunit alpha, chloroplastic (505 aa).

170–177 is an ATP binding site; it reads GDRQTGKT.

It belongs to the ATPase alpha/beta chains family. F-type ATPases have 2 components, CF(1) - the catalytic core - and CF(0) - the membrane proton channel. CF(1) has five subunits: alpha(3), beta(3), gamma(1), delta(1), epsilon(1). CF(0) has four main subunits: a, b, b' and c.

Its subcellular location is the plastid. The protein resides in the chloroplast thylakoid membrane. The catalysed reaction is ATP + H2O + 4 H(+)(in) = ADP + phosphate + 5 H(+)(out). Its function is as follows. Produces ATP from ADP in the presence of a proton gradient across the membrane. The alpha chain is a regulatory subunit. This Carica papaya (Papaya) protein is ATP synthase subunit alpha, chloroplastic.